The primary structure comprises 326 residues: tRNA(Ile)-lysidine synthase (326 aa).

23–28 (SGGVDS) is an ATP binding site.

This sequence belongs to the tRNA(Ile)-lysidine synthase family.

The protein localises to the cytoplasm. It catalyses the reaction cytidine(34) in tRNA(Ile2) + L-lysine + ATP = lysidine(34) in tRNA(Ile2) + AMP + diphosphate + H(+). Its function is as follows. Ligates lysine onto the cytidine present at position 34 of the AUA codon-specific tRNA(Ile) that contains the anticodon CAU, in an ATP-dependent manner. Cytidine is converted to lysidine, thus changing the amino acid specificity of the tRNA from methionine to isoleucine. The chain is tRNA(Ile)-lysidine synthase from Wolinella succinogenes (strain ATCC 29543 / DSM 1740 / CCUG 13145 / JCM 31913 / LMG 7466 / NCTC 11488 / FDC 602W) (Vibrio succinogenes).